A 228-amino-acid chain; its full sequence is NADH-quinone oxidoreductase subunit C (228 aa).

This sequence belongs to the complex I 30 kDa subunit family. NDH-1 is composed of 14 different subunits. Subunits NuoB, C, D, E, F, and G constitute the peripheral sector of the complex.

It localises to the cell membrane. The enzyme catalyses a quinone + NADH + 5 H(+)(in) = a quinol + NAD(+) + 4 H(+)(out). In terms of biological role, NDH-1 shuttles electrons from NADH, via FMN and iron-sulfur (Fe-S) centers, to quinones in the respiratory chain. The immediate electron acceptor for the enzyme in this species is believed to be a menaquinone. Couples the redox reaction to proton translocation (for every two electrons transferred, four hydrogen ions are translocated across the cytoplasmic membrane), and thus conserves the redox energy in a proton gradient. The sequence is that of NADH-quinone oxidoreductase subunit C from Mycobacteroides abscessus (strain ATCC 19977 / DSM 44196 / CCUG 20993 / CIP 104536 / JCM 13569 / NCTC 13031 / TMC 1543 / L948) (Mycobacterium abscessus).